The primary structure comprises 391 residues: MGESGPVVIDPRRHDAVLFGVGDALGSALASQLGQIGVGTAAFAADGPAAAADRLRVRPGRCVVVAGDPAAVEAARTAGFALVIGLAPVGRDGDGLRGAGADAVVAELEQITVRTGDRRMSQLPDASQALTGGADGLAGRHPAVFFDFDGTLSDIVDDPDAARPVAGATAALTRLAARCPVAVLSGRDLADVTKRVGVLGIWYAGSHGFELTAPDGSHHQNDDAAAAIPVLAQAAGRLRDELGAIPGVVVEHKRFGVAVHYRNAARDRVGEVAAAVRAAGRHDALRVTTGREVIELRPDLDWDKGKTLHWVIEHLRRSGSGALTPVYLGDDITDEDAFDAVRGGPVQGVPILVRHNDDGDRATAALFALDSPARAAEFTERLADQLERGEG.

The Nucleophile role is filled by aspartate 147. Residues aspartate 147, aspartate 149, and aspartate 330 each contribute to the Mg(2+) site. A substrate-binding site is contributed by 147–149 (DFD).

Belongs to the trehalose phosphatase family. It depends on Mg(2+) as a cofactor.

The catalysed reaction is alpha,alpha-trehalose 6-phosphate + H2O = alpha,alpha-trehalose + phosphate. It participates in glycan biosynthesis; trehalose biosynthesis. Removes the phosphate from trehalose 6-phosphate to produce free trehalose. This chain is Trehalose-phosphate phosphatase (otsB), found in Mycolicibacterium paratuberculosis (strain ATCC BAA-968 / K-10) (Mycobacterium paratuberculosis).